Consider the following 283-residue polypeptide: Thymidylate synthase (283 aa).

Position 33 (Arg-33) interacts with dUMP. His-63 contacts (6R)-5,10-methylene-5,6,7,8-tetrahydrofolate. A dUMP-binding site is contributed by 138-139; that stretch reads RR. Catalysis depends on Cys-158, which acts as the Nucleophile. Residues 185–188, Asn-196, and 226–228 contribute to the dUMP site; these read RSAD and HIY. Position 188 (Asp-188) interacts with (6R)-5,10-methylene-5,6,7,8-tetrahydrofolate. Ala-282 contributes to the (6R)-5,10-methylene-5,6,7,8-tetrahydrofolate binding site.

This sequence belongs to the thymidylate synthase family. Bacterial-type ThyA subfamily. Homodimer.

Its subcellular location is the cytoplasm. It carries out the reaction dUMP + (6R)-5,10-methylene-5,6,7,8-tetrahydrofolate = 7,8-dihydrofolate + dTMP. It participates in pyrimidine metabolism; dTTP biosynthesis. Catalyzes the reductive methylation of 2'-deoxyuridine-5'-monophosphate (dUMP) to 2'-deoxythymidine-5'-monophosphate (dTMP) while utilizing 5,10-methylenetetrahydrofolate (mTHF) as the methyl donor and reductant in the reaction, yielding dihydrofolate (DHF) as a by-product. This enzymatic reaction provides an intracellular de novo source of dTMP, an essential precursor for DNA biosynthesis. The polypeptide is Thymidylate synthase (Methylibium petroleiphilum (strain ATCC BAA-1232 / LMG 22953 / PM1)).